A 424-amino-acid chain; its full sequence is tRNA (guanine-N(7)-)-methyltransferase non-catalytic subunit wuho (424 aa).

Residues 42-92 form a disordered region; the sequence is LKGHTSQSQESCTAAAAASTATAASGQAPGGKEQQLANQPEEGGTSASASG. The segment covering 46–68 has biased composition (low complexity); sequence TSQSQESCTAAAAASTATAASGQ. WD repeat units follow at residues 96–137, 184–223, 227–265, and 324–364; these read ATST…ARLL, GHLS…DIHS, GHRE…ELLQ, and AGSW…PASS.

This sequence belongs to the WD repeat TRM82 family. In terms of assembly, forms a heterodimer with the catalytic subunit Mettl1. Interacts with mei-P26 and weakly interacts with bgcn; required for the function or formation of the mei-P26-bgcn-bam-sxl complex. Interacts with nanos; may be involved in mei-P26-dependent derepression of the BMP signaling pathway. Interacts with Myc; the interaction may be mediated by mei-P26 and may be involved in the regulation of ribosome biogenesis. In testis, it is present at high level in hub cells, a niche for germline stem cells of testis. Ubiquitously expressed in all testicular cells throughout spermatogenesis. Ubiquitously expressed in all germline and somatic cells of the ovary.

The protein localises to the nucleus. Its subcellular location is the cytoplasm. It functions in the pathway tRNA modification; N(7)-methylguanine-tRNA biosynthesis. Its function is as follows. Required for the Mettl1-dependent formation of N(7)-methylguanine at position 46 (m7G46) in tRNA. In the Mettl1-wuho methyltransferase complex, it is required to stabilize and induce conformational changes of the catalytic subunit. Required for binding of nanos mRNA and repression of translation by the mei-P26-bgcn-bam-sxl complex. May cooperate with mei-P26 and nanos to derepress the BMP signaling pathway. May cooperate with mei-P26 to suppress expression of a subset of microRNAs. May cooperate with mei-P26 to regulate bam expression levels in germline cells during gametogenesis. Required to promote mitosis to meiosis transition during gametogenesis. May regulate germline cell division in part by regulating ribosome biogenesis. This is tRNA (guanine-N(7)-)-methyltransferase non-catalytic subunit wuho from Drosophila melanogaster (Fruit fly).